A 147-amino-acid polypeptide reads, in one-letter code: uncharacterized protein (147 aa).

Residues 7–147 (LEINYKTDEL…GHDVLVWAPK (141 aa)) enclose the N-acetyltransferase domain.

This is an uncharacterized protein from Staphylococcus haemolyticus (strain JCSC1435).